A 236-amino-acid polypeptide reads, in one-letter code: Ribose-5-phosphate isomerase (236 aa).

Substrate is bound by residues Thr27–Thr30, Asp84–Asp87, and Lys97–Gly100. Glu106 functions as the Proton acceptor in the catalytic mechanism. Lys124 is a binding site for substrate.

The protein belongs to the ribose 5-phosphate isomerase family. In terms of assembly, homodimer.

It carries out the reaction aldehydo-D-ribose 5-phosphate = D-ribulose 5-phosphate. It participates in carbohydrate degradation; pentose phosphate pathway; D-ribose 5-phosphate from D-ribulose 5-phosphate (non-oxidative stage): step 1/1. Its function is as follows. Involved in the first step of the non-oxidative branch of the pentose phosphate pathway. It catalyzes the reversible conversion of ribose-5-phosphate to ribulose 5-phosphate. The protein is Ribose-5-phosphate isomerase of Plasmodium falciparum (isolate 3D7).